The following is a 125-amino-acid chain: Putative oxygen-evolving enhancer protein 2-2 (125 aa).

At Ser15 the chain carries Phosphoserine.

This sequence belongs to the PsbP family.

The sequence is that of Putative oxygen-evolving enhancer protein 2-2 (PSBP2) from Arabidopsis thaliana (Mouse-ear cress).